The following is a 417-amino-acid chain: uncharacterized protein (417 aa).

It to M.tuberculosis Rv2067c.

This is an uncharacterized protein from Synechococcus sp. (strain ATCC 27144 / PCC 6301 / SAUG 1402/1) (Anacystis nidulans).